The sequence spans 493 residues: Transcript termination protein OPG145 (493 aa).

The 157-residue stretch at Met100–Ser256 folds into the Helicase ATP-binding domain. Leu113–Thr120 serves as a coordination point for ATP. The DESH box motif lies at Asp206–His209. Positions Ile309–Gly456 constitute a Helicase C-terminal domain.

It belongs to the helicase family. Poxviruses subfamily. In terms of assembly, interacts with OPG087. Might be part of a transcription complex composed at least of OPG087, OPG110, and OPG145.

It localises to the virion. Functionally, DNA helicase which seems to act as a postreplicative transcription termination factor. Involved in ATP-dependent release of nascent RNA. Forms a stable complex with single-stranded DNA, and to a lesser extent RNA. The polypeptide is Transcript termination protein OPG145 (OPG145) (Homo sapiens (Human)).